A 348-amino-acid chain; its full sequence is MSDQISIIAPDDWHVHLRDGEMLNQVVAHTARRFQRAIVMPNLRPPVTTVAAAQAYRDRIQAACPADLEFTPLMTAYLTDSIAPAELETGFREGVFAAAKLYPANATTNSAAGVTDLLQIDPVLETMARIGMPLLIHGEVTDPEIDIFDREAAFIERHLEPLRERHPELKVVLEHITTEQAVQYVSSADRHLAATITPHHLHINRNAMFAGGLRSDFYCLPVAKRECHRQALRRAATSGDPSFFLGTDTAPHERSSKESACGCAGIFNAPFALESYAQVFDQEGALEHFEAFTSLNGPAFYKLPANTHRITLQRRDHLVPELVNGLVPFHAGEILSWAVANAPDQVQL.

Zn(2+) is bound by residues H14 and H16. Residues H16 to R18 and N42 contribute to the substrate site. Zn(2+)-binding residues include K100, H137, and H175. K100 carries the post-translational modification N6-carboxylysine. H137 contacts substrate. Residue L220 coordinates substrate. D248 serves as a coordination point for Zn(2+). The active site involves D248. Substrate-binding residues include H252 and A264.

Belongs to the metallo-dependent hydrolases superfamily. DHOase family. Class II DHOase subfamily. In terms of assembly, homodimer. It depends on Zn(2+) as a cofactor.

It carries out the reaction (S)-dihydroorotate + H2O = N-carbamoyl-L-aspartate + H(+). Its pathway is pyrimidine metabolism; UMP biosynthesis via de novo pathway; (S)-dihydroorotate from bicarbonate: step 3/3. Its function is as follows. Catalyzes the reversible cyclization of carbamoyl aspartate to dihydroorotate. The protein is Dihydroorotase of Synechococcus sp. (strain CC9605).